Here is a 315-residue protein sequence, read N- to C-terminus: Aspartate carbamoyltransferase catalytic subunit (315 aa).

The carbamoyl phosphate site is built by Arg64 and Thr65. An L-aspartate-binding site is contributed by Lys92. Positions 114, 142, and 145 each coordinate carbamoyl phosphate. Arg175 and Arg229 together coordinate L-aspartate. Carbamoyl phosphate contacts are provided by Gly270 and Pro271.

This sequence belongs to the aspartate/ornithine carbamoyltransferase superfamily. ATCase family. Heterododecamer (2C3:3R2) of six catalytic PyrB chains organized as two trimers (C3), and six regulatory PyrI chains organized as three dimers (R2).

It catalyses the reaction carbamoyl phosphate + L-aspartate = N-carbamoyl-L-aspartate + phosphate + H(+). The protein operates within pyrimidine metabolism; UMP biosynthesis via de novo pathway; (S)-dihydroorotate from bicarbonate: step 2/3. Functionally, catalyzes the condensation of carbamoyl phosphate and aspartate to form carbamoyl aspartate and inorganic phosphate, the committed step in the de novo pyrimidine nucleotide biosynthesis pathway. The chain is Aspartate carbamoyltransferase catalytic subunit from Methylorubrum extorquens (strain CM4 / NCIMB 13688) (Methylobacterium extorquens).